The sequence spans 995 residues: Bifunctional glutamine synthetase adenylyltransferase/adenylyl-removing enzyme (995 aa).

Positions 1–474 are adenylyl removase; it reads MNHSAPGNAD…HYEKLFEGDD (474 aa). GlnE regions lie at residues 122–333 and 637–853; these read RRMK…MKRQ and SYEE…MRRA. The interval 479–995 is adenylyl transferase; sequence AKLPALDYSA…LEGTSPASAR (517 aa).

The protein belongs to the GlnE family. Mg(2+) serves as cofactor.

The enzyme catalyses [glutamine synthetase]-O(4)-(5'-adenylyl)-L-tyrosine + phosphate = [glutamine synthetase]-L-tyrosine + ADP. It catalyses the reaction [glutamine synthetase]-L-tyrosine + ATP = [glutamine synthetase]-O(4)-(5'-adenylyl)-L-tyrosine + diphosphate. In terms of biological role, involved in the regulation of glutamine synthetase GlnA, a key enzyme in the process to assimilate ammonia. When cellular nitrogen levels are high, the C-terminal adenylyl transferase (AT) inactivates GlnA by covalent transfer of an adenylyl group from ATP to specific tyrosine residue of GlnA, thus reducing its activity. Conversely, when nitrogen levels are low, the N-terminal adenylyl removase (AR) activates GlnA by removing the adenylyl group by phosphorolysis, increasing its activity. The regulatory region of GlnE binds the signal transduction protein PII (GlnB) which indicates the nitrogen status of the cell. The chain is Bifunctional glutamine synthetase adenylyltransferase/adenylyl-removing enzyme from Bradyrhizobium diazoefficiens (strain JCM 10833 / BCRC 13528 / IAM 13628 / NBRC 14792 / USDA 110).